We begin with the raw amino-acid sequence, 610 residues long: MNSQDLKKRQEKIRNFSIIAHIDHGKSTLADRILEKTETVSSREMQAQLLDSMDLERERGITIKLNAIELNYTAKDGETYIFHLIDTPGHVDFTYEVSRSLAACEGAILVVDAAQGIEAQTLANVYLALDNDLEILPVINKIDLPAADPERVRHEVEDVIGLDASEAVLASAKAGIGIEEILEQIVEKVPAPTGDVDAPLQALIFDSVYDAYRGVILQVRIVNGIVKPGDKIQMMSNGKTFDVTEVGIFTPKAVGRDFLATGDVGYVAASIKTVADTRVGDTVTLANNPAKEALHGYKQMNPMVFAGIYPIESNKYNDLREALEKLQLNDASLQFEPETSQALGFGFRCGFLGLLHMDVIQERLEREFNIDLIMTAPSVVYHVHTTDEDMIEVSNPSEFPAPTRVAFIEEPYVKAQIMVPQEFVGAVMELSQRKRGDFVTMDYIDDNRVNVIYQIPLAEIVFDFFDKLKSSTRGYASFDYDMSEYRRSQLVKMDILLNGDKVDALSFIVHKEFAYERGKIIVEKLKKIIPRQQFEVPIQAAIGQKIVARSDIKALRKNVLAKCYGGDVSRKRKLLEKQKAGKKRMKAIGSVEVPQEAFLSVLSMDEDAKK.

The tr-type G domain maps to 11-193 (EKIRNFSIIA…QIVEKVPAPT (183 aa)). GTP is bound by residues 23–28 (DHGKST) and 140–143 (NKID).

It belongs to the TRAFAC class translation factor GTPase superfamily. Classic translation factor GTPase family. LepA subfamily.

It is found in the cell membrane. The catalysed reaction is GTP + H2O = GDP + phosphate + H(+). Its function is as follows. Required for accurate and efficient protein synthesis under certain stress conditions. May act as a fidelity factor of the translation reaction, by catalyzing a one-codon backward translocation of tRNAs on improperly translocated ribosomes. Back-translocation proceeds from a post-translocation (POST) complex to a pre-translocation (PRE) complex, thus giving elongation factor G a second chance to translocate the tRNAs correctly. Binds to ribosomes in a GTP-dependent manner. This chain is Elongation factor 4, found in Streptococcus pyogenes serotype M6 (strain ATCC BAA-946 / MGAS10394).